Reading from the N-terminus, the 630-residue chain is Long-chain-fatty-acid--AMP ligase FadD32 (630 aa).

Residues 187–192, Ser-342, Ala-346, Asp-469, and Arg-483 each bind ATP; that span reads TSGSTR.

This sequence belongs to the ATP-dependent AMP-binding enzyme family. As to quaternary structure, monomer.

The catalysed reaction is a long-chain fatty acid + holo-[ACP] + ATP = a long-chain fatty acyl-[ACP] + AMP + diphosphate. The enzyme catalyses decanoate + ATP + H(+) = decanoyl-AMP + diphosphate. It catalyses the reaction dodecanoate + ATP + H(+) = dodecanoyl-AMP + diphosphate. It carries out the reaction tetradecanoate + ATP + H(+) = tetradecanoyl-AMP + diphosphate. Its pathway is lipid metabolism; mycolic acid biosynthesis. With respect to regulation, the acyl-AMP ligase activity is inhibited by the alkylphosphate ester of AMP, adenosine 50-dodecylphosphate (AMPC12). Also inhibited by eicosyl-AMP (AMPC20). Its function is as follows. Involved in the biosynthesis of mycolic acids. Catalyzes the activation of long-chain fatty acids as acyl-adenylates (acyl-AMP), which are then transferred to the phosphopantetheine arm of the polyketide synthase Pks13 for further chain extension. Can use decanoate (C10), dodecanoate (C12) and tetradecanoate (C14). The polypeptide is Long-chain-fatty-acid--AMP ligase FadD32 (Mycolicibacterium smegmatis (strain ATCC 700084 / mc(2)155) (Mycobacterium smegmatis)).